Consider the following 580-residue polypeptide: Purine permease (580 aa).

12 helical membrane-spanning segments follow: residues 68–88 (PLVL…AGVI), 107–127 (SQYL…VQMF), 136–156 (YYVG…ITVA), 184–204 (YGAL…LSFM), 211–231 (ALFP…SLIG), 263–283 (LPWG…TIIL), 294–314 (SCAV…CGYF), 385–405 (LGNG…MSVF), 426–446 (CCFF…LVAI), 447–467 (PSSV…ISGV), 481–501 (FILT…DWFS), and 522–542 (LVMA…NLIL).

Belongs to the nucleobase:cation symporter-2 (NCS2) (TC 2.A.40) family.

The protein localises to the membrane. Its function is as follows. Able to transport with low efficiency all natural purines as well as purine analogs. The protein is Purine permease (uapC) of Emericella nidulans (strain FGSC A4 / ATCC 38163 / CBS 112.46 / NRRL 194 / M139) (Aspergillus nidulans).